Consider the following 90-residue polypeptide: Envelope protein US9 (90 aa).

Residues 1–67 (MTSRLSDPNS…RRRRTRCVGM (67 aa)) lie on the Intravirion side of the membrane. An Internalization motif motif is present at residues 21–24 (YPTA). The interval 30 to 39 (EAYYSESEDE) is acidic. Ser-34 and Ser-36 each carry phosphoserine; by host CK2. The helical; Signal-anchor for type II membrane protein transmembrane segment at 68-88 (VIACLLVAVLSGGFGALLMWL) threads the bilayer. Over 89–90 (LR) the chain is Virion surface.

It belongs to the alphaherpesvirinae envelope protein US9 family. Phosphorylated on serines within the acidic cluster, possibly by host CK2. Phosphorylation determines whether endocytosed viral US9 traffics to the trans-Golgi network or recycles to the cell membrane.

The protein localises to the virion membrane. It is found in the host Golgi apparatus membrane. It localises to the host smooth endoplasmic reticulum membrane. Its subcellular location is the host cell membrane. In terms of biological role, essential for the anterograde spread of the infection throughout the host nervous system. Together with the gE/gI heterodimer, US9 is involved in the sorting and transport of viral structural components toward axon tips. The chain is Envelope protein US9 from Homo sapiens (Human).